Here is a 376-residue protein sequence, read N- to C-terminus: Actin-related protein T1 (376 aa).

Belongs to the actin family.

The protein localises to the cytoplasm. It is found in the cytoskeleton. Its subcellular location is the nucleus. The protein resides in the cytoplasmic vesicle. It localises to the secretory vesicle. The protein localises to the acrosome. In terms of biological role, negatively regulates the Hedgehog (SHH) signaling. Binds to the promoter of the SHH signaling mediator, GLI1, and inhibits its expression. The sequence is that of Actin-related protein T1 (Actrt1) from Rattus norvegicus (Rat).